The primary structure comprises 815 residues: Lon protease 2 (815 aa).

The Lon N-terminal domain maps to 19–212 (LPVLPLINTV…RLSVVLSQEI (194 aa)). 365–372 (GPPGVGKT) lines the ATP pocket. Residues 601-782 (RDEIGVATGM…DEVLPIAFVS (182 aa)) form the Lon proteolytic domain. Active-site residues include Ser688 and Lys731.

This sequence belongs to the peptidase S16 family. Homohexamer. Organized in a ring with a central cavity.

Its subcellular location is the cytoplasm. It catalyses the reaction Hydrolysis of proteins in presence of ATP.. Its function is as follows. ATP-dependent serine protease that mediates the selective degradation of mutant and abnormal proteins as well as certain short-lived regulatory proteins. Required for cellular homeostasis and for survival from DNA damage and developmental changes induced by stress. Degrades polypeptides processively to yield small peptide fragments that are 5 to 10 amino acids long. Binds to DNA in a double-stranded, site-specific manner. The polypeptide is Lon protease 2 (Herpetosiphon aurantiacus (strain ATCC 23779 / DSM 785 / 114-95)).